Here is a 61-residue protein sequence, read N- to C-terminus: UPF0434 protein TM1040_0056 (61 aa).

It belongs to the UPF0434 family.

The polypeptide is UPF0434 protein TM1040_0056 (Ruegeria sp. (strain TM1040) (Silicibacter sp.)).